Reading from the N-terminus, the 326-residue chain is Putative replication protein B (326 aa).

The protein belongs to the ParB family.

This is Putative replication protein B from Sinorhizobium fredii (strain NBRC 101917 / NGR234).